Reading from the N-terminus, the 157-residue chain is MQLTVKALQGRDCSLQVPEDELVSTLKQLVSEKLNVPVRQQRLLFKGKALADGKRLSDYSIGPNSKLNLVVKPLEKVLLEEGTGRRLADSPPPQVWQLISKVLARHFSAADASRVLEQLQRDYERSLSRLTLDDIERLAGRFLHPEVTETMEKGFSK.

The Ubiquitin-like domain maps to 1–76 (MQLTVKALQG…LNLVVKPLEK (76 aa)). Lysine 48 is covalently cross-linked (Glycyl lysine isopeptide (Lys-Gly) (interchain with G-Cter in ubiquitin)). A Phosphoserine modification is found at serine 90. The segment at 96–138 (WQLISKVLARHFSAADASRVLEQLQRDYERSLSRLTLDDIERL) is required and sufficient for interaction with BAG6.

Component of the BAG6/BAT3 complex, at least composed of BAG6, UBL4A and GET4/TRC35. Interacts with BAG6; the interaction is direct and required for UBL4A protein stability. Interacts with USP13; may be indirect via BAG6. Polyubiquitinated. Ubiquitination by AMFR and deubiquitination by USP13 may regulate the interaction between the BAG6/BAT complex and SGTA and therefore may regulate client proteins fate.

It is found in the cytoplasm. The protein localises to the cytosol. Its subcellular location is the nucleus. Its function is as follows. As part of a cytosolic protein quality control complex, the BAG6/BAT3 complex, maintains misfolded and hydrophobic patches-containing proteins in a soluble state and participates in their proper delivery to the endoplasmic reticulum or alternatively can promote their sorting to the proteasome where they undergo degradation. The BAG6/BAT3 complex is involved in the post-translational delivery of tail-anchored/type II transmembrane proteins to the endoplasmic reticulum membrane. Recruited to ribosomes, it interacts with the transmembrane region of newly synthesized tail-anchored proteins and together with SGTA and ASNA1 mediates their delivery to the endoplasmic reticulum. Client proteins that cannot be properly delivered to the endoplasmic reticulum are ubiquitinated and sorted to the proteasome. Similarly, the BAG6/BAT3 complex also functions as a sorting platform for proteins of the secretory pathway that are mislocalized to the cytosol either delivering them to the proteasome for degradation or to the endoplasmic reticulum. The BAG6/BAT3 complex also plays a role in the endoplasmic reticulum-associated degradation (ERAD), a quality control mechanism that eliminates unwanted proteins of the endoplasmic reticulum through their retrotranslocation to the cytosol and their targeting to the proteasome. It maintains these retrotranslocated proteins in an unfolded yet soluble state condition in the cytosol to ensure their proper delivery to the proteasome. The chain is Ubiquitin-like protein 4A (UBL4A) from Callithrix jacchus (White-tufted-ear marmoset).